The following is a 209-amino-acid chain: Ubiquinone biosynthesis protein COQ4 homolog 2, mitochondrial (209 aa).

Zn(2+)-binding residues include histidine 118, aspartate 119, histidine 122, and glutamate 134.

It belongs to the COQ4 family. In terms of assembly, component of a multi-subunit COQ enzyme complex. Zn(2+) is required as a cofactor.

Its subcellular location is the mitochondrion inner membrane. It catalyses the reaction a 4-hydroxy-3-methoxy-5-(all-trans-polyprenyl)benzoate + H(+) = a 2-methoxy-6-(all-trans-polyprenyl)phenol + CO2. The protein operates within cofactor biosynthesis; ubiquinone biosynthesis. In terms of biological role, lyase that catalyzes the C1-decarboxylation of 4-hydroxy-3-methoxy-5-(all-trans-polyprenyl)benzoic acid into 2-methoxy-6-(all-trans-polyprenyl)phenol during ubiquinone biosynthesis. This Paramecium tetraurelia protein is Ubiquinone biosynthesis protein COQ4 homolog 2, mitochondrial.